Consider the following 317-residue polypeptide: DNA-directed RNA polymerase subunit alpha (317 aa).

An alpha N-terminal domain (alpha-NTD) region spans residues 1–230 (MIEIEMEKPK…EHLNLFITLT (230 aa)). The alpha C-terminal domain (alpha-CTD) stretch occupies residues 247–317 (KEKVLEMTIE…LGLGLRPSDE (71 aa)).

It belongs to the RNA polymerase alpha chain family. As to quaternary structure, homodimer. The RNAP catalytic core consists of 2 alpha, 1 beta, 1 beta' and 1 omega subunit. When a sigma factor is associated with the core the holoenzyme is formed, which can initiate transcription.

The catalysed reaction is RNA(n) + a ribonucleoside 5'-triphosphate = RNA(n+1) + diphosphate. In terms of biological role, DNA-dependent RNA polymerase catalyzes the transcription of DNA into RNA using the four ribonucleoside triphosphates as substrates. The protein is DNA-directed RNA polymerase subunit alpha of Alkaliphilus oremlandii (strain OhILAs) (Clostridium oremlandii (strain OhILAs)).